The primary structure comprises 48 residues: MPVQLGVQHYFSAHWGIDATATVSFGIDTKLAKFRIPYTLRFGPVFRT.

This is an uncharacterized protein from Treponema pallidum (strain Nichols).